The primary structure comprises 303 residues: 1-phosphofructokinase (303 aa).

Gly248–Asp249 contributes to the ATP binding site. Asp249 (proton acceptor) is an active-site residue.

Belongs to the carbohydrate kinase PfkB family.

The enzyme catalyses beta-D-fructose 1-phosphate + ATP = beta-D-fructose 1,6-bisphosphate + ADP + H(+). In terms of biological role, catalyzes the ATP-dependent phosphorylation of fructose-l-phosphate to fructose-l,6-bisphosphate. This chain is 1-phosphofructokinase (fruK), found in Bacillus subtilis (strain 168).